The primary structure comprises 216 residues: uncharacterized protein (216 aa).

Transmembrane regions (helical) follow at residues 5 to 27, 98 to 120, 125 to 147, and 185 to 207; these read ISLI…IAFS, FLSF…VFLL, VLIW…TFTN, and GTLF…GILG.

The protein localises to the cell membrane. This is an uncharacterized protein from Aquifex aeolicus (strain VF5).